The following is a 186-amino-acid chain: Ribosome maturation factor RimM (186 aa).

The 74-residue stretch at 93–166 (PDEYYDHQLM…RAVIDPPPGL (74 aa)) folds into the PRC barrel domain. Positions 160 to 186 (IDPPPGLIDDRAEVDSSDTEAATEADA) are disordered. A compositionally biased stretch (acidic residues) spans 174-186 (DSSDTEAATEADA).

It belongs to the RimM family. In terms of assembly, binds ribosomal protein uS19.

It localises to the cytoplasm. An accessory protein needed during the final step in the assembly of 30S ribosomal subunit, possibly for assembly of the head region. Essential for efficient processing of 16S rRNA. May be needed both before and after RbfA during the maturation of 16S rRNA. It has affinity for free ribosomal 30S subunits but not for 70S ribosomes. This chain is Ribosome maturation factor RimM, found in Streptomyces avermitilis (strain ATCC 31267 / DSM 46492 / JCM 5070 / NBRC 14893 / NCIMB 12804 / NRRL 8165 / MA-4680).